Here is an 831-residue protein sequence, read N- to C-terminus: Glycerol-3-phosphate acyltransferase (831 aa).

Residues 304-309 carry the HXXXXD motif motif; the sequence is CHRSHM. The segment at 801–831 is disordered; sequence VSMPAETSNQPEAPETPETPETPEPEGKTES.

The protein belongs to the GPAT/DAPAT family.

It localises to the cell inner membrane. The catalysed reaction is sn-glycerol 3-phosphate + an acyl-CoA = a 1-acyl-sn-glycero-3-phosphate + CoA. The protein operates within phospholipid metabolism; CDP-diacylglycerol biosynthesis; CDP-diacylglycerol from sn-glycerol 3-phosphate: step 1/3. This Yersinia pseudotuberculosis serotype IB (strain PB1/+) protein is Glycerol-3-phosphate acyltransferase.